Consider the following 355-residue polypeptide: MHC class I-like protein MILL2 (355 aa).

An N-terminal signal peptide occupies residues 1-29 (MKASSGKPREFRPAVLLLILGLLLRDSRG). The segment at 46 to 137 (RLTRTHTLRY…VINQKSQEEG (92 aa)) is alpha-1. 3 disulfide bridges follow: Cys96–Cys107, Cys147–Cys210, and Cys249–Cys306. Residues Asn104 and Asn152 are each glycosylated (N-linked (GlcNAc...) asparagine). The segment at 138–229 (LHTLQATLGC…SLRNGLQDTG (92 aa)) is alpha-2. The alpha-3 stretch occupies residues 230–323 (PPMVTVTCRN…SIMQTAVSGH (94 aa)). The Ig-like C1-type domain occupies 231–321 (PMVTVTCRNY…NHSIMQTAVS (91 aa)). An N-linked (GlcNAc...) asparagine glycan is attached at Asn312. A connecting peptide region spans residues 324–329 (AAEDSQ). The GPI-anchor amidated aspartate moiety is linked to residue Asp330. The propeptide at 331–355 (VASSATASAGSALPVVLAVALARAN) is removed in mature form.

It belongs to the MHC class I family. As to quaternary structure, heterodimer with B2M (beta-2-microglobulin). N-glycosylated. As to expression, ubiquitously expressed in neonatal and adult tissues.

The protein localises to the cell membrane. Its function is as follows. Binds to heparan sulfate proteoglycans on the surface of fibroblast (NIH-3T3) cells. This is MHC class I-like protein MILL2 from Mus musculus (Mouse).